The sequence spans 349 residues: MSKVPPTDPFSHMLNGNLQQRIVKRDIDGEVPTERAVTDLASEKAHAIATHGEVVIQIQHSDTFGMDKEKNDWRSRAARMLYIESRLVREGLSESLAMFFFMSLLLGCAATARFTGNQNDPMLAAFYHGFSIIFAIYVAGGISGGLLNPAITFTIAFLGRLSWLRCLIYMSAQYFGAFIASAVVYLIYYDSLQNFSGANKVDETGANGTAGIWSTFPRPYLSLRGAIFNQIFCTMLLTIGFLSICDFRNSRPDKGMFPFAVGMLIMTVFLAFSYSAGAAMNPARDISPRLWTLIVGYGDEVFSYNNYKWFWIPWLFPYVGALLGGVIYEIFIGIHWPKDYANKHVTNRT.

2 helical membrane passes run 92 to 112 (LSES…AATA) and 125 to 147 (AFYH…GGLL). Positions 148-150 (NPA) match the NPA 1 motif. Residues 167–187 (LIYMSAQYFGAFIASAVVYLI) traverse the membrane as a helical segment. Residues Asn-194 and Asn-207 are each glycosylated (N-linked (GlcNAc...) asparagine). The next 2 helical transmembrane spans lie at 225–245 (GAIF…LSIC) and 256–276 (MFPF…SYSA). The NPA 2 motif lies at 281 to 283 (NPA). A helical transmembrane segment spans residues 314 to 334 (WLFPYVGALLGGVIYEIFIGI).

It belongs to the MIP/aquaporin (TC 1.A.8) family.

Its subcellular location is the cell membrane. Aquaglyceroporin that may modulate the water content and osmolytes during anhydrobiosis. The chain is Aquaporin-4 from Milnesium tardigradum (Water bear).